Consider the following 753-residue polypeptide: 5-methyltetrahydropteroyltriglutamate--homocysteine methyltransferase (753 aa).

5-methyltetrahydropteroyltri-L-glutamate is bound by residues 17-20 (RELK) and Lys117. Residues 431 to 433 (IGS) and Glu484 contribute to the L-homocysteine site. L-methionine-binding positions include 431–433 (IGS) and Glu484. 5-methyltetrahydropteroyltri-L-glutamate is bound by residues 515-516 (RC) and Trp561. Asp599 is an L-homocysteine binding site. L-methionine is bound at residue Asp599. Residue Glu605 participates in 5-methyltetrahydropteroyltri-L-glutamate binding. Residues His641, Cys643, and Glu665 each coordinate Zn(2+). The active-site Proton donor is His694. Cys726 contributes to the Zn(2+) binding site.

Belongs to the vitamin-B12 independent methionine synthase family. Zn(2+) serves as cofactor.

The enzyme catalyses 5-methyltetrahydropteroyltri-L-glutamate + L-homocysteine = tetrahydropteroyltri-L-glutamate + L-methionine. The protein operates within amino-acid biosynthesis; L-methionine biosynthesis via de novo pathway; L-methionine from L-homocysteine (MetE route): step 1/1. Catalyzes the transfer of a methyl group from 5-methyltetrahydrofolate to homocysteine resulting in methionine formation. This Shigella flexneri serotype 5b (strain 8401) protein is 5-methyltetrahydropteroyltriglutamate--homocysteine methyltransferase.